Consider the following 235-residue polypeptide: Carboxy-S-adenosyl-L-methionine synthase (235 aa).

S-adenosyl-L-methionine-binding positions include Tyr-35, 60-62 (GCS), 83-84 (DN), Asn-124, and Arg-191.

Belongs to the class I-like SAM-binding methyltransferase superfamily. Cx-SAM synthase family. As to quaternary structure, homodimer.

The catalysed reaction is prephenate + S-adenosyl-L-methionine = carboxy-S-adenosyl-L-methionine + 3-phenylpyruvate + H2O. In terms of biological role, catalyzes the conversion of S-adenosyl-L-methionine (SAM) to carboxy-S-adenosyl-L-methionine (Cx-SAM). The chain is Carboxy-S-adenosyl-L-methionine synthase from Campylobacter jejuni subsp. doylei (strain ATCC BAA-1458 / RM4099 / 269.97).